Consider the following 630-residue polypeptide: Scarecrow-like protein 34 (630 aa).

A GRAS domain is found at 240–628 (KKKKSQVVDF…RTLYASSCWV (389 aa)). Residues 247-312 (VDFRTLLTHC…GSTGPMIQTY (66 aa)) are leucine repeat I (LRI). The interval 331-396 (YRVYLSSSPF…DVPRKLRITG (66 aa)) is VHIID. Positions 362–366 (LHIVD) match the VHIID motif. Positions 412–444 (ETGRRLAEYCKRFNVPFEYKAIASQNWETIRIE) are leucine repeat II (LRII). A PFYRE region spans residues 454 to 549 (LAVNAGLRLK…REFYGREAMN (96 aa)). Residues 552-628 (ACEEADRVER…RTLYASSCWV (77 aa)) are SAW.

It belongs to the GRAS family.

Its subcellular location is the nucleus. Functionally, probable transcription factor involved in plant development. This is Scarecrow-like protein 34 (SCL34) from Arabidopsis thaliana (Mouse-ear cress).